Here is a 360-residue protein sequence, read N- to C-terminus: MEAKNNRILKDKTFDKSRWIQMPRDVIAGHDALLQLPNVITDLGVTGPLLLLSGKTTLQTVGLEVLRLLEDRQVTSAVVGEITYEEIARVEDLAQNIGAVLIIAVGGGRVIDTAKVVSYNLDIQFISVPTAASHDGIASSRASIMTADGNVSVAAHPPLAIVADTGIIAGAPHRLMAAGYADMVANYTAVMDWDLSKSKTGEQVSEYAMTLSMITAELMVENAEKIKAFDENAAWIVVKALFASGVAMSIAGSSRPASGGEHKFAHMLERLVPGKVLHGEACGVGTIISMIMHEGDWKKIRNSLRLIGAPTTPKDLGISDEIVIEAILRAKEIRPERYTIFDEDITREQAECLVARLYEE.

NAD(+)-binding positions include 108–112 and 130–133; these read GRVID and TAAS. Residue aspartate 135 coordinates substrate. Serine 139 is a binding site for NAD(+). Aspartate 182 contributes to the substrate binding site. The Zn(2+) site is built by aspartate 182 and histidine 262. Histidine 266 lines the substrate pocket. Histidine 278 lines the Zn(2+) pocket.

This sequence belongs to the glycerol-1-phosphate dehydrogenase family. Zn(2+) is required as a cofactor.

Its subcellular location is the cytoplasm. The enzyme catalyses sn-glycerol 1-phosphate + NAD(+) = dihydroxyacetone phosphate + NADH + H(+). The catalysed reaction is sn-glycerol 1-phosphate + NADP(+) = dihydroxyacetone phosphate + NADPH + H(+). It functions in the pathway membrane lipid metabolism; glycerophospholipid metabolism. Functionally, catalyzes the NAD(P)H-dependent reduction of dihydroxyacetonephosphate (DHAP or glycerone phosphate) to glycerol 1-phosphate (G1P). The G1P thus generated is used as the glycerophosphate backbone of phospholipids in the cellular membranes of Archaea. The sequence is that of Glycerol-1-phosphate dehydrogenase [NAD(P)+] from Methanocorpusculum labreanum (strain ATCC 43576 / DSM 4855 / Z).